Consider the following 177-residue polypeptide: NAD(P)H-quinone oxidoreductase subunit 6, chloroplastic (177 aa).

Helical transmembrane passes span 10 to 30, 32 to 52, 61 to 81, 93 to 115, and 152 to 172; these read ILLV…VLLT, PIYS…FHIL, AQLL…VMFM, WTVG…IATI, and FFLP…GAIA.

The protein belongs to the complex I subunit 6 family. As to quaternary structure, NDH is composed of at least 16 different subunits, 5 of which are encoded in the nucleus.

The protein resides in the plastid. Its subcellular location is the chloroplast thylakoid membrane. It catalyses the reaction a plastoquinone + NADH + (n+1) H(+)(in) = a plastoquinol + NAD(+) + n H(+)(out). The catalysed reaction is a plastoquinone + NADPH + (n+1) H(+)(in) = a plastoquinol + NADP(+) + n H(+)(out). Functionally, NDH shuttles electrons from NAD(P)H:plastoquinone, via FMN and iron-sulfur (Fe-S) centers, to quinones in the photosynthetic chain and possibly in a chloroplast respiratory chain. The immediate electron acceptor for the enzyme in this species is believed to be plastoquinone. Couples the redox reaction to proton translocation, and thus conserves the redox energy in a proton gradient. This chain is NAD(P)H-quinone oxidoreductase subunit 6, chloroplastic (ndhG), found in Amborella trichopoda.